A 363-amino-acid polypeptide reads, in one-letter code: Class I histocompatibility antigen, Gogo-B*0201 alpha chain (363 aa).

A signal peptide spans 1 to 24 (MQVTAPRTLLLLLSAALALTETWA). The tract at residues 25 to 114 (GSHSMRYFHT…LRGYYNQSED (90 aa)) is alpha-1. At 25–308 (GSHSMRYFHT…EPSSQSTIPI (284 aa)) the chain is on the extracellular side. Asparagine 110 carries N-linked (GlcNAc...) asparagine glycosylation. The segment at 115 to 206 (GSHTIQRMYG…ENGKETLQRA (92 aa)) is alpha-2. 2 cysteine pairs are disulfide-bonded: cysteine 125-cysteine 188 and cysteine 227-cysteine 283. The tract at residues 207 to 298 (DPPKTHVTHH…GLPEPLTLRW (92 aa)) is alpha-3. Residues 209 to 297 (PKTHVTHHPI…EGLPEPLTLR (89 aa)) enclose the Ig-like C1-type domain. A connecting peptide region spans residues 299-308 (EPSSQSTIPI). The helical transmembrane segment at 309 to 333 (VGIVAGLAVLVVTVAVVAVVAAVMC) threads the bilayer. The Cytoplasmic segment spans residues 334–363 (RRKSSGGKGGSYSQAASSDSAQGSDVSLTA). Residues 336-363 (KSSGGKGGSYSQAASSDSAQGSDVSLTA) are disordered. Over residues 344 to 363 (SYSQAASSDSAQGSDVSLTA) the composition is skewed to low complexity.

The protein belongs to the MHC class I family. In terms of assembly, heterodimer of an alpha chain and a beta chain (beta-2-microglobulin).

The protein localises to the membrane. Involved in the presentation of foreign antigens to the immune system. The chain is Class I histocompatibility antigen, Gogo-B*0201 alpha chain from Gorilla gorilla gorilla (Western lowland gorilla).